The primary structure comprises 237 residues: Ras-related protein Rab-23 (237 aa).

Residues Val20, Gly21, Lys22, Ser23, Ser24, Tyr38, and Thr41 each contribute to the GTP site. Ser23 provides a ligand contact to Mg(2+). The Switch 1 signature appears at 28 to 46 (RYCKGIFTKDYKKTIGVDF). Positions 41 and 64 each coordinate Mg(2+). Residues 65-84 (TAGQEEFDAITKAYYRGAQA) carry the Switch 2 motif. Residues Gly67, Asn121, Lys122, Asp124, Ser151, Val152, and Lys153 each coordinate GTP. Phosphoserine occurs at positions 186 and 187. Over residues 188 to 208 (SNKIGVFNTSGGSHSGQNSGT) the composition is skewed to polar residues. Residues 188–237 (SNKIGVFNTSGGSHSGQNSGTLNGGDVINLRPNKQRTKKNRNPFSSCSIP) are disordered. Cys234 is subject to Cysteine methyl ester. Cys234 carries the S-geranylgeranyl cysteine lipid modification. Positions 235-237 (SIP) are cleaved as a propeptide — removed in mature form.

The protein belongs to the small GTPase superfamily. Rab family. In terms of assembly, interacts with SUFU. It depends on Mg(2+) as a cofactor.

The protein resides in the cell membrane. Its subcellular location is the cytoplasm. It localises to the cytoplasmic vesicle. The protein localises to the autophagosome. It is found in the endosome membrane. The protein resides in the phagosome. Its subcellular location is the phagosome membrane. It catalyses the reaction GTP + H2O = GDP + phosphate + H(+). With respect to regulation, regulated by guanine nucleotide exchange factors (GEFs) which promote the exchange of bound GDP for free GTP. Regulated by GTPase activating proteins (GAPs) which increase the GTP hydrolysis activity. Inhibited by GDP dissociation inhibitors (GDIs). Functionally, the small GTPases Rab are key regulators of intracellular membrane trafficking, from the formation of transport vesicles to their fusion with membranes. Rabs cycle between an inactive GDP-bound form and an active GTP-bound form that is able to recruit to membranes different set of downstream effectors directly responsible for vesicle formation, movement, tethering and fusion. Together with SUFU, prevents nuclear import of GLI1, and thereby inhibits GLI1 transcription factor activity. Regulates GLI1 in differentiating chondrocytes. Likewise, regulates GLI3 proteolytic processing and modulates GLI2 and GLI3 transcription factor activity. Plays a role in autophagic vacuole assembly, and mediates defense against pathogens, such as S.aureus, by promoting their capture by autophagosomes that then merge with lysosomes. The protein is Ras-related protein Rab-23 of Homo sapiens (Human).